Here is a 175-residue protein sequence, read N- to C-terminus: MSEQKQEIENENAQNSENLQDDLQDNEKNETNELQKELEELKDKYMRANAEFENIKKRMEKEKLSAMAYANESFAKDLLDVLDALEAAVNVECQDEISLKIKEGVQNTLDLFLKKLEKHGVALIKDEKEFDPNLHEAMFHVDSENHQSGEVVQVLQKGYKIADRVIRPTKVSVAK.

Residues Met1–Gln35 form a disordered region. Residues Asp25–Gln35 show a composition bias toward basic and acidic residues.

The protein belongs to the GrpE family. Homodimer.

It localises to the cytoplasm. Functionally, participates actively in the response to hyperosmotic and heat shock by preventing the aggregation of stress-denatured proteins, in association with DnaK and GrpE. It is the nucleotide exchange factor for DnaK and may function as a thermosensor. Unfolded proteins bind initially to DnaJ; upon interaction with the DnaJ-bound protein, DnaK hydrolyzes its bound ATP, resulting in the formation of a stable complex. GrpE releases ADP from DnaK; ATP binding to DnaK triggers the release of the substrate protein, thus completing the reaction cycle. Several rounds of ATP-dependent interactions between DnaJ, DnaK and GrpE are required for fully efficient folding. This chain is Protein GrpE, found in Campylobacter jejuni (strain RM1221).